The primary structure comprises 213 residues: uncharacterized protein (213 aa).

The next 3 membrane-spanning stretches (helical) occupy residues 26–46, 112–132, and 136–156; these read FINFIRIAIFIVMAWIGGLKV, ASYIIGAIIVTVGILTLAGIW, and AGLAGGLLTFGMSIVTLSFLI.

Its subcellular location is the cell membrane. This is an uncharacterized protein from Haemophilus influenzae (strain ATCC 51907 / DSM 11121 / KW20 / Rd).